The following is an 838-amino-acid chain: Envelope glycoprotein H (838 aa).

An N-terminal signal peptide occupies residues 1 to 18; that stretch reads MGNGLWFVGVIILGAAWG. Residues 19-803 lie on the Virion surface side of the membrane; the sequence is QVHDWTEQTD…DTQPVAAIAP (785 aa). 2 N-linked (GlcNAc...) asparagine; by host glycosylation sites follow: Asn73 and Asn120. A disordered region spans residues 174-204; the sequence is FPRGDNVATASHPSGPRDTPPPRPPVGARRH. Residue Asn216 is glycosylated (N-linked (GlcNAc...) asparagine; by host). Residues 259–323 form an interaction with gL region; that stretch reads DAALVRARYG…PGGPRYRVFV (65 aa). Asn332, Asn437, Asn670, and Asn784 each carry an N-linked (GlcNAc...) asparagine; by host glycan. Residues 804 to 824 traverse the membrane as a helical segment; the sequence is GFLAASALGVVMITAALAGIL. The Intravirion segment spans residues 825–838; that stretch reads KVLRTSVPFFWRRE.

The protein belongs to the herpesviridae glycoprotein H family. Interacts with glycoprotein L (gL); this interaction is necessary for the correct processing and cell surface expression of gH. The heterodimer gH/gL seems to interact with gB trimers during fusion. N-glycosylated, O-glycosylated, and sialylated.

It is found in the virion membrane. Its subcellular location is the host cell membrane. The protein localises to the host endosome membrane. The heterodimer glycoprotein H-glycoprotein L is required for the fusion of viral and plasma membranes leading to virus entry into the host cell. Following initial binding to host receptor, membrane fusion is mediated by the fusion machinery composed of gB and the heterodimer gH/gL. May also be involved in the fusion between the virion envelope and the outer nuclear membrane during virion morphogenesis. The protein is Envelope glycoprotein H of Homo sapiens (Human).